Consider the following 596-residue polypeptide: Potassium-transporting ATPase potassium-binding subunit (596 aa).

10 helical membrane-spanning segments follow: residues 6–26 (ILTIVLYVGVLLLLAYPLGGF), 67–87 (AIGLIAFNILGVLFVFGLQLF), 136–156 (GLTTQNFLSAASGIVVVIALI), 177–197 (ITLYVLVPISVVYAIFLVGQG), 283–303 (LSNFIQILSIFLIPAALCFTF), 314–334 (WVVLVTMILIFLTVTFAAVHF), 413–433 (GLYGMLVFAILAVFIAGLMIG), 450–470 (MVAIAILVTPILALVGTAIAV), 518–538 (MLAIAMWFGRFGVIVPVLALA), and 560–580 (LFIVLLAGTVILVGALNYVPA).

The protein belongs to the KdpA family. The system is composed of three essential subunits: KdpA, KdpB and KdpC.

The protein resides in the cell inner membrane. Its function is as follows. Part of the high-affinity ATP-driven potassium transport (or Kdp) system, which catalyzes the hydrolysis of ATP coupled with the electrogenic transport of potassium into the cytoplasm. This subunit binds the periplasmic potassium ions and delivers the ions to the membrane domain of KdpB through an intramembrane tunnel. The polypeptide is Potassium-transporting ATPase potassium-binding subunit (Polynucleobacter asymbioticus (strain DSM 18221 / CIP 109841 / QLW-P1DMWA-1) (Polynucleobacter necessarius subsp. asymbioticus)).